Here is a 178-residue protein sequence, read N- to C-terminus: Cell division protein SepF (178 aa).

Over residues 19–45 (EHYESEHHTPHKDEDDSMEHDREERRA) the composition is skewed to basic and acidic residues. The segment at 19-65 (EHYESEHHTPHKDEDDSMEHDREERRAPAPVREIARETPTPHAAEEE) is disordered.

The protein belongs to the SepF family. As to quaternary structure, homodimer. Interacts with FtsZ.

It localises to the cytoplasm. Functionally, cell division protein that is part of the divisome complex and is recruited early to the Z-ring. Probably stimulates Z-ring formation, perhaps through the cross-linking of FtsZ protofilaments. Its function overlaps with FtsA. The chain is Cell division protein SepF from Arthrobacter sp. (strain FB24).